Reading from the N-terminus, the 692-residue chain is Elongation factor G (692 aa).

The 275-residue stretch at 8 to 282 folds into the tr-type G domain; that stretch reads DKTRNIGIMA…AVLDYLPAPT (275 aa). GTP is bound by residues 17–24, 81–85, and 135–138; these read AHIDAGKT, DTPGH, and NKMD.

The protein belongs to the TRAFAC class translation factor GTPase superfamily. Classic translation factor GTPase family. EF-G/EF-2 subfamily.

Its subcellular location is the cytoplasm. In terms of biological role, catalyzes the GTP-dependent ribosomal translocation step during translation elongation. During this step, the ribosome changes from the pre-translocational (PRE) to the post-translocational (POST) state as the newly formed A-site-bound peptidyl-tRNA and P-site-bound deacylated tRNA move to the P and E sites, respectively. Catalyzes the coordinated movement of the two tRNA molecules, the mRNA and conformational changes in the ribosome. The sequence is that of Elongation factor G from Bacillus pumilus (strain SAFR-032).